The following is a 326-amino-acid chain: Neuferricin homolog (326 aa).

Positions 1-34 (MDKNRRRTDDAGLMTKTLAGIAALVFFLSFICSS) are cleaved as a signal peptide. The region spanning 98 to 197 (KHVFTPEQLH…KEYPLVGVVA (100 aa)) is the Cytochrome b5 heme-binding domain.

It belongs to the cytochrome b5 family. MAPR subfamily.

It is found in the secreted. In terms of biological role, heme-binding protein. The sequence is that of Neuferricin homolog (tag-131) from Caenorhabditis elegans.